The following is a 392-amino-acid chain: Dual-specificity RNA methyltransferase RlmN (392 aa).

Catalysis depends on glutamate 116, which acts as the Proton acceptor. In terms of domain architecture, Radical SAM core spans 122 to 364; it reads EEGRGTLCVS…SPIRTPRGED (243 aa). Cysteine 129 and cysteine 369 are oxidised to a cystine. Cysteine 136, cysteine 140, and cysteine 143 together coordinate [4Fe-4S] cluster. S-adenosyl-L-methionine is bound by residues 195-196, serine 227, 249-251, and asparagine 326; these read GE and SFH. Cysteine 369 (S-methylcysteine intermediate) is an active-site residue.

The protein belongs to the radical SAM superfamily. RlmN family. Requires [4Fe-4S] cluster as cofactor.

The protein localises to the cytoplasm. The enzyme catalyses adenosine(2503) in 23S rRNA + 2 reduced [2Fe-2S]-[ferredoxin] + 2 S-adenosyl-L-methionine = 2-methyladenosine(2503) in 23S rRNA + 5'-deoxyadenosine + L-methionine + 2 oxidized [2Fe-2S]-[ferredoxin] + S-adenosyl-L-homocysteine. It catalyses the reaction adenosine(37) in tRNA + 2 reduced [2Fe-2S]-[ferredoxin] + 2 S-adenosyl-L-methionine = 2-methyladenosine(37) in tRNA + 5'-deoxyadenosine + L-methionine + 2 oxidized [2Fe-2S]-[ferredoxin] + S-adenosyl-L-homocysteine. In terms of biological role, specifically methylates position 2 of adenine 2503 in 23S rRNA and position 2 of adenine 37 in tRNAs. m2A2503 modification seems to play a crucial role in the proofreading step occurring at the peptidyl transferase center and thus would serve to optimize ribosomal fidelity. In Cereibacter sphaeroides (strain ATCC 17025 / ATH 2.4.3) (Rhodobacter sphaeroides), this protein is Dual-specificity RNA methyltransferase RlmN.